Here is a 478-residue protein sequence, read N- to C-terminus: 3-isopropylmalate dehydratase large subunit (478 aa).

Residues cysteine 359, cysteine 420, and cysteine 423 each contribute to the [4Fe-4S] cluster site.

The protein belongs to the aconitase/IPM isomerase family. LeuC type 1 subfamily. As to quaternary structure, heterodimer of LeuC and LeuD. Requires [4Fe-4S] cluster as cofactor.

It catalyses the reaction (2R,3S)-3-isopropylmalate = (2S)-2-isopropylmalate. It participates in amino-acid biosynthesis; L-leucine biosynthesis; L-leucine from 3-methyl-2-oxobutanoate: step 2/4. Catalyzes the isomerization between 2-isopropylmalate and 3-isopropylmalate, via the formation of 2-isopropylmaleate. This chain is 3-isopropylmalate dehydratase large subunit, found in Psychrobacter sp. (strain PRwf-1).